The sequence spans 274 residues: Large ribosomal subunit protein uL2 (274 aa).

The interval 223–274 is disordered; that stretch reads VAMNPVDHPHGGGEGRTSGGRHPVSPWGMPTKGFKTRKNKSTDKYIVRRRNK.

This sequence belongs to the universal ribosomal protein uL2 family. As to quaternary structure, part of the 50S ribosomal subunit. Forms a bridge to the 30S subunit in the 70S ribosome.

One of the primary rRNA binding proteins. Required for association of the 30S and 50S subunits to form the 70S ribosome, for tRNA binding and peptide bond formation. It has been suggested to have peptidyltransferase activity; this is somewhat controversial. Makes several contacts with the 16S rRNA in the 70S ribosome. The protein is Large ribosomal subunit protein uL2 of Aliivibrio fischeri (strain ATCC 700601 / ES114) (Vibrio fischeri).